A 282-amino-acid polypeptide reads, in one-letter code: Inositol oxygenase (282 aa).

A disordered region spans residues 1 to 25 (MKDPDPSQVYRPDMDPEAAKDKGSF). Residues 12-24 (PDMDPEAAKDKGS) show a composition bias toward basic and acidic residues. Arg-26 lines the substrate pocket. A Phosphoserine modification is found at Ser-30. Position 82-84 (82-84 (DES)) interacts with substrate. Residues His-95, His-120, and Asp-121 each contribute to the Fe cation site. Substrate is bound by residues Lys-124 and 138–139 (GD). 3 residues coordinate Fe cation: His-191, His-217, and Asp-250. Residue 217 to 218 (HS) participates in substrate binding.

It belongs to the myo-inositol oxygenase family. The cofactor is Fe cation. The N-terminus is blocked. Kidney specific.

The protein localises to the cytoplasm. It carries out the reaction myo-inositol + O2 = D-glucuronate + H2O + H(+). Its pathway is polyol metabolism; myo-inositol degradation into D-glucuronate; D-glucuronate from myo-inositol: step 1/1. This Sus scrofa (Pig) protein is Inositol oxygenase (MIOX).